The following is a 445-amino-acid chain: Adenylosuccinate synthetase (445 aa).

Residues 24–30 (GDEGKGK) and 52–54 (GHT) each bind GTP. Asp25 acts as the Proton acceptor in catalysis. Asp25 and Gly52 together coordinate Mg(2+). Residues 25–28 (DEGK), 50–53 (NAGH), Thr147, Arg161, Asn238, Thr253, and Arg317 contribute to the IMP site. Residue His53 is the Proton donor of the active site. 313 to 319 (TTTGRRR) lines the substrate pocket. GTP contacts are provided by residues Arg319, 345-347 (KLD), and 427-429 (GVG).

The protein belongs to the adenylosuccinate synthetase family. In terms of assembly, homodimer. Mg(2+) is required as a cofactor.

It is found in the cytoplasm. It catalyses the reaction IMP + L-aspartate + GTP = N(6)-(1,2-dicarboxyethyl)-AMP + GDP + phosphate + 2 H(+). Its pathway is purine metabolism; AMP biosynthesis via de novo pathway; AMP from IMP: step 1/2. Its function is as follows. Plays an important role in the de novo pathway and in the salvage pathway of purine nucleotide biosynthesis. Catalyzes the first committed step in the biosynthesis of AMP from IMP. The chain is Adenylosuccinate synthetase from Malassezia globosa (strain ATCC MYA-4612 / CBS 7966) (Dandruff-associated fungus).